Here is a 1904-residue protein sequence, read N- to C-terminus: MATGGGPFEEGMNDQDLPSWSNESLDDRLNNTDWGCQQKKANRSSEKNKKKLGGEAETRLTNDISPESSPGMGRRKTRTPHSFPHARYMTQMSVPEQAELERLKQRINFSDLDQINTNKSKDPVSGSQKKESGEPLQCKELFGAALNKDFLQNGQLSIQEDGRGEPTMDSSQARDPQQEAKEELENLKKQHDLLKRMLQQQEQLKALQGRQAALLALQHKAEQAVAVVDDSVVTETTGSVSGVSLTSELNEELIDLIQRFHNQLHDSQTQSVPDNRRQAESLSLTREISQSRNSSVSEHQSDEKAQLFNKMRMLQGKKQKMDKLLGELHTLRDQHLNNSSFFPASSSPQRSIDQRSTTSAASAPVGVVTVINGESNSLASAPYPPDSLASQNESEEDDNLNPTEKLQKLNEVRKRLNELRELVHYYEQTSDMMTDAVNENTKEEEETEDSGSDSEHGDPQPVTNIRNPQGISSWSEINSNSNVQCGTNNRDGRHLNTDCEINNRSAANIRTLKMSSTLDCHNREDDKHADLPHGEDDEVEEDRASEDSMSSHRSSLGDVAGDAEFEQKINRLMAAKQKLRQLQNLAAMVQDDDPEPQVLTANASNMGDFLGEMEETKQQPNNVRVSTNKLQKDAGLNEKAREKFYEAKLQQQQRELKQLQEERRKLMEIQEKIEVLQKACPDLQSAGLGNSPANRQTSPATSTPAMNECNTAGKPLLEFGESVPVGNELWSEMRRHEILREELRRRRKQLEALMAEHQRRRELAETISTVAASVKSEGSEAQRTPQQSRTENRTMATWGGSTQCALDEEDGDEDGYLSDGLDQAEEEEDAPSMNDSFSAYPNNQIPESVYYLKGNKDRWKNCRPLSADGNYRPMSKTRQQQNISMRRQENFRWISELSYVEEKEQWQEQINQLKKQLEFSVSICQTLMQDQQTLSCFLQTLLAGPYNVVPNNVASSQVHLIMHQLNQCYTQLSWQQNNVQRLKQMLNDLMHQQEQQCQEKPSRKERGSSAPPPPSPVFCPFSFPPQPVNLFNIPGFTNISSFAPGINYNPVFPCGFGDFAHSGFPQSSEQQQHPLDHNASGKTEYMAFPKPFESSSSTGAENQRSHRQPEDEVEKRSTWLNDSQEVKKDDQSQQKAGFPVSVQSIASGHKNQSDTSRRRNFDEESLESFSSMPDPVDPTTVTKTFKSRKASAQASLASKDKTPKSKNKRKNSSQLKGRIKNTGYDSASASSVCEPCKSTKSKHSEEVVHAKVFSKKNREQLEKIIKYSRSTEMSSETGSDLSMFEALRDTIYSEVATLISQNESRPHFLIELFHELQLLNTDYLRQRALYALQDIVTRHLSENNEKGRCIKSLNTATWIASNSELTPSESLASTDDETFDKNFPTEACQDCEQNDADNGSTMSTSSHFEPFATDDLGNTVIHLDQALARMREYERMKIEAESTLDSEGCSSNLQGATAAKLEGPSTSECLSVPQSSEVSAVPCPRIDTQQLDRQIKAIMKEVIPFLKEHMDEVCSSQLLTSVRRMVLTLTQQNDESKEFVKFFHKQLGSILQDSLAKFAGRKLKDCGEDLLVEISEVLFNELAFFKLMQDLDNNSISVKQRCKRKIETTEEIQSYAKEDKDETETVKPVQGLETYDGNEVPESIKSDASDQEEDEESESGPVAISLSKAETQALTNYGSGEDENEDEEIEFEEGPVDVQTSLQASSETATENEQISSQELSKTKGSDILSSEQQSVNVKGEQDAATILPHYLNVVENTPPLPVNTPESFIAASMKTEESSSSLPGNETQMLDTACVVNKSSAGSSESSMAGSPDTESPVLVNEYEAGSGNVSQKSDEDDFVKVEDLPLKLAVYSEADLLKKIASEAQTNSLSDELLGGGGEQDRELVGDAQTLKEPETFGAQSA.

Disordered stretches follow at residues 1-135 (MATG…SGEP), 159-179 (QEDG…PQQE), 265-303 (HDSQ…QSDE), 338-361 (NSSF…TSAA), 376-407 (NSLA…EKLQ), 430-489 (SDMM…GTNN), and 520-559 (CHNR…LGDV). Basic and acidic residues predominate over residues 43 to 60 (RSSEKNKKKLGGEAETRL). Positions 107-118 (INFSDLDQINTN) are enriched in polar residues. Residues 171–212 (SQARDPQQEAKEELENLKKQHDLLKRMLQQQEQLKALQGRQA) are a coiled coil. Positions 280-298 (ESLSLTREISQSRNSSVSE) are enriched in polar residues. Residues 301–334 (SDEKAQLFNKMRMLQGKKQKMDKLLGELHTLRDQ) are a coiled coil. Low complexity predominate over residues 338-348 (NSSFFPASSSP). Residues 349–361 (QRSIDQRSTTSAA) are compositionally biased toward polar residues. Residues 403–429 (TEKLQKLNEVRKRLNELRELVHYYEQT) adopt a coiled-coil conformation. A compositionally biased stretch (acidic residues) spans 442 to 452 (KEEEETEDSGS). Over residues 461-470 (PVTNIRNPQG) the composition is skewed to polar residues. Residues 471–482 (ISSWSEINSNSN) are compositionally biased toward low complexity. The span at 520-534 (CHNREDDKHADLPHG) shows a compositional bias: basic and acidic residues. Positions 535–544 (EDDEVEEDRA) are enriched in acidic residues. 2 coiled-coil regions span residues 562-592 (DAEF…VQDD) and 636-686 (LNEK…LQSA). A disordered region spans residues 686–706 (AGLGNSPANRQTSPATSTPAM). Polar residues predominate over residues 687–706 (GLGNSPANRQTSPATSTPAM). Residues 731–768 (SEMRRHEILREELRRRRKQLEALMAEHQRRRELAETIS) are a coiled coil. The segment at 773 to 840 (SVKSEGSEAQ…PSMNDSFSAY (68 aa)) is disordered. The span at 779–804 (SEAQRTPQQSRTENRTMATWGGSTQC) shows a compositional bias: polar residues. The segment covering 806 to 830 (LDEEDGDEDGYLSDGLDQAEEEEDA) has biased composition (acidic residues). Coiled-coil stretches lie at residues 895 to 927 (SELS…CQTL) and 970 to 1000 (TQLS…CQEK). Disordered regions lie at residues 991–1018 (HQQE…SPVF), 1063–1082 (GFPQ…ASGK), and 1088–1225 (FPKP…TGYD). Composition is skewed to polar residues over residues 1064-1073 (FPQSSEQQQH) and 1093-1102 (ESSSSTGAEN). A compositionally biased stretch (basic and acidic residues) spans 1103 to 1117 (QRSHRQPEDEVEKRS). A compositionally biased stretch (polar residues) spans 1141–1150 (SVQSIASGHK). Positions 1151–1162 (NQSDTSRRRNFD) are enriched in basic and acidic residues. The segment covering 1173-1182 (PDPVDPTTVT) has biased composition (low complexity). Positions 1421-1447 (IHLDQALARMREYERMKIEAESTLDSE) form a coiled coil. Basic and acidic residues predominate over residues 1616 to 1625 (AKEDKDETET). 3 disordered regions span residues 1616–1741 (AKED…VKGE), 1774–1838 (MKTE…SDED), and 1865–1904 (EAQT…AQSA). Residues 1649–1658 (SDQEEDEESE) show a composition bias toward acidic residues. The segment covering 1668–1678 (KAETQALTNYG) has biased composition (polar residues). Positions 1680–1695 (GEDENEDEEIEFEEGP) are enriched in acidic residues. Composition is skewed to polar residues over residues 1698 to 1720 (VQTS…SQEL), 1728 to 1737 (ILSSEQQSVN), and 1779 to 1791 (SSSS…TQML). Residues 1800–1812 (SSAGSSESSMAGS) are compositionally biased toward low complexity. Residues 1881–1897 (EQDRELVGDAQTLKEPE) show a composition bias toward basic and acidic residues.

This sequence belongs to the PCM1 family. Self-associates.

It is found in the cytoplasm. The protein resides in the cytoskeleton. It localises to the microtubule organizing center. The protein localises to the centrosome. Its subcellular location is the cytoplasmic granule. It is found in the centriolar satellite. The protein resides in the cilium basal body. In terms of biological role, required for centrosome assembly and function. Essential for the correct localization of several centrosomal proteins including CETN3 and PCNT. Required to anchor microtubules to the centrosome. Probably involved in the biogenesis of cilia. The polypeptide is Pericentriolar material 1 protein (PCM1) (Gallus gallus (Chicken)).